The primary structure comprises 31 residues: Dermaseptin-DI3 (31 aa).

This sequence belongs to the frog skin active peptide (FSAP) family. Dermaseptin subfamily. In terms of tissue distribution, expressed by the skin glands.

It is found in the secreted. Functionally, antibacterial activity against Gram-positive bacteria S.aureus and E.faecalis, and Gram-negative bacteria P.aeruginosa and E.coli. The sequence is that of Dermaseptin-DI3 from Phyllomedusa distincta (Monkey frog).